The primary structure comprises 91 residues: MSVKIRLKRMGSKKRPFYRIVVADSRAPRDGRFITSVGTYNPLTTPKEVKFDEDAVMEWLQKGAQPSDTVRNMLQAAGVMKKYHEAKYAKK.

Belongs to the bacterial ribosomal protein bS16 family.

This is Small ribosomal subunit protein bS16 from Limosilactobacillus reuteri (strain DSM 20016) (Lactobacillus reuteri).